The following is a 237-amino-acid chain: Ribosomal RNA small subunit methyltransferase G (237 aa).

Residues Gly78, Phe83, 129–130 (AE), and Arg146 contribute to the S-adenosyl-L-methionine site.

This sequence belongs to the methyltransferase superfamily. RNA methyltransferase RsmG family.

The protein localises to the cytoplasm. Functionally, specifically methylates the N7 position of a guanine in 16S rRNA. This Mesoplasma florum (strain ATCC 33453 / NBRC 100688 / NCTC 11704 / L1) (Acholeplasma florum) protein is Ribosomal RNA small subunit methyltransferase G.